The sequence spans 2672 residues: eIF-2-alpha kinase activator GCN1 (2672 aa).

HEAT repeat units follow at residues 5 to 42 (LNWEDISPVLEKGTRESHVSKRVPFLQDISQLVRQETL), 79 to 117 (NLEPCLLENFIRFISDVVISNPATKAVADYLNLLDWINS), 174 to 211 (CIFQTTVKAFLKCLKDNDDSISFMKISIKTVLESYSKL), 227 to 267 (QAAL…NPPS), 329 to 366 (FASSKLINQYFSSFKSSKEVVRSVSLQSMIILLRKISN), 372 to 410 (EDLTKLIDEIFKNIKSNLNADYKSLISKILIEIPLTHYE), 509 to 549 (HGHA…NSSI), 611 to 648 (KYVTSVLLAITSELPDKEASIKVLINALVIAQWNIFNI), 706 to 745 (IQPNEFTPILCKTIEADLTADDFSRLSEEDFEIFAGEEGV), 902 to 932 (QDYLQEPLVELLTRVLFRIKFVSNQAAIDSI), and 933 to 970 (SLTYILPLLINVLEKGKAIALKNADKPVVKAEFVEEDE). Residues 975 to 994 (LLLAMEIISVHAEAFEDPSI) form an HEAT 12; degenerate repeat. The stretch at 995–1030 (PRISIVEVLLSLLSLPSKAKIAKDCFNALCQSISVA) is one HEAT 13; degenerate repeat. HEAT repeat units lie at residues 1031-1067 (PNQEDLDMILSNLLSPNQFVRSTILETLDNEFELEPF), 1099-1138 (VVNDELLKSLFPLFNQDDSGLRLFAANAYAFGAVSLFTSE), 1185-1224 (STVAITLKIMAKAFSAEDDTVVNIIKFLVDDGGLVDREPI), 1243-1281 (QNSKDLIPIFEEALSSSTDSALKENVIILYGTLARHLQQ), 1284-1321 (ARIHTIIERLLSTLDTPSADIQQAVSACIAPLVFQFKQ), 1363-1401 (LSEFDIIRNLIEAAEDKKEPKRRESVGFCFQYLSESLGK), 1405-1442 (PYVIEILPNILKNLGDAVPEVRDATARATKAIMAHTTG), 1444-1480 (GVKKLIPVAVSNLDEIAWRTKRGSVQLLGNMAYLDPT), 1484-1521 (ASLSTIVPEIVGVLNDSHKEVRKAADESLKRFGEVIRN), 1523-1559 (EIQKLVPVLLQAIGDPTKYTEEALDSLIQTQFVHYID), 1561-1598 (PSLALIIHIIHRGMHDRSANIKRKACKIVGNMAILVDT), 1603-1640 (PYLQQLIDEVEIAMVDPVPNTRATAARALGALVERLGE), 1641-1679 (EQFPDLIPRLLDTLSDESKSGDRLGSAQALAEVISGLGL), 1681-1717 (KLDEMLPTILAGVTNFRAYIREGFMPLLLFLPVCFGS), 1721-1758 (PYINQIIQPILSGLADNDENIRDTALKAGKLIVKNYAT), 1760-1796 (AVDLLLPELERGMFDENDRIRLSSVQLTGELLFQVTG), 1825-1862 (DRRDRILAALFVCRNDTSGIVRATTVDIWKALVPNTPR), 1863-1903 (AVKE…RVGG), 1905-1942 (ALSQLLPSLEESLIETSNSDSRQGVCIALYELIESAST), 1947-1984 (QFQSTIVNIIRTALIDESATVREAAALSFDVFQDVVGK), 1985-2024 (TAVDEVLPYLLHMLESSDNSDFALLGLQEIMSKKSDVIFP), 2026-2055 (LIPTLLAPPIDAFRASALGSLAEVAGSALY), 2057-2095 (RLSIIINALVDAIIGTSEDESTKGALELALDRVFLSVND), 2097-2134 (EGLHPLLQQIMSLLKSDNIEKRIAVLERLPNFFDKTVL), 2138-2175 (VYIPNFVSHAILSLDDEDQRVVNGNFNALSTLLKKVDK), 2206-2243 (RGPNCVLPIFLHGLMYGSNDEREESALAIADVVSKTPA), 2250-2286 (VSVITGPLIRVVGERFSSDIKAAILFALNVLFIKIPM), 2290-2328 (PFIPQLQRTFVKSLSDATNETLRLRAAKALGALIEHQPR), 2347-2384 (GVKTAMLKALLEVIMKAGSKLNENSKTNIVNLVEEEML), 2392-2429 (VAYAKLIGSLSEILSNDEAHKILQDKVLNADLDGETGK), 2450-2487 (GLIDEFVSYILNAIRSPDVYFGENGTIAAGKLLLLEGE), and 2506-2546 (ENIN…FKFD). The tract at residues 1330–1641 (LMEKLLNPTV…GALVERLGEE (312 aa)) is EF3-like region. The segment at 2207 to 2356 (GPNCVLPIFL…GVKTAMLKAL (150 aa)) is RWDBD region.

The protein belongs to the GCN1 family. Interacts (via N- and C-terminus) with GCN2 (via N-terminal RWD domain); this interaction stimulates GCN2 kinase activity in a GCN20-dependent manner in response to amino acid starvation. Interacts (via C-terminus) with GCN20 (via N-terminus); this interaction stimulates GCN2 kinase activity in response to amino acid starvation. The GCN1-GCN20 complex interacts with GCN2 on translating ribosomes in amino acid-starved cells; GCN1 may bind near the ribosomal A-site and promotes the transfer of uncharged tRNAs from the A-site to the tRNA-binding domain in GCN2 for its subsequent kinase activation, and hence allowing GCN4 translational activation and derepression of amino acid biosynthetic genes. Interacts (via C-terminus) with YIH1 (via N-terminus); this interaction reduces the GCN1-GCN20 complex formation and prevents the interaction of GCN1 with GCN2 and GCN2 kinase activation in amino acid-starved cells. Interacts with GIR2; this interaction prevents the interaction of GCN1 with GCN2 and GCN2 kinase activation in amino acid-starved cells. Interacts (via middle region) with RPS10A and RPS10B; these interactions are direct and promote GCN2 kinase activation. Associates (via N-terminus) with ribosomes; this association is stimulated in a ATP- and GCN20-dependent manner and is necessary to activate GCN2 kinase activity.

It is found in the cytoplasm. Its function is as follows. Ribosome collision sensor that activates a translation quality control pathway when a ribosome has stalled during translation. Directly binds to the ribosome and acts as a sentinel for colliding ribosomes. GCN1 also acts as a positive activator of the integrated stress response (ISR) by mediating activation of GCN2 in response to low amino acid, carbon, or purine availability. Component of the GCN1-GCN20 complex that forms a complex with GCN2 on translating ribosomes: during this process, GCN1 acts as a chaperone to facilitate delivery of uncharged tRNAs that enter the A-site of ribosomes to the tRNA-binding domain of GCN2, and hence stimulating GCN2 kinase activity, leading to phosphorylation of eukaryotic translation initiation factor 2 (eIF-2-alpha/SUI2). eIF-2-alpha/SUI2 phosphorylation converts eIF-2-alpha/SUI2 into a global protein synthesis inhibitor, leading to a global attenuation of cap-dependent translation, and thus to a reduced overall utilization of amino acids, while concomitantly initiating the preferential translation of ISR-specific mRNAs, such as the transcriptional activator GCN4, and hence allowing GCN4-mediated reprogramming of amino acid biosynthetic gene expression to alleviate nutrient depletion. The sequence is that of eIF-2-alpha kinase activator GCN1 from Saccharomyces cerevisiae (strain ATCC 204508 / S288c) (Baker's yeast).